A 582-amino-acid polypeptide reads, in one-letter code: SUMO-activating enzyme subunit uba-2 (582 aa).

ATP-binding positions include 20 to 25, D44, 52 to 55, K68, 91 to 92, and 113 to 118; these read GAGGIG, NLNR, SI, and DNRAAR. C154 and C157 together coordinate Zn(2+). C170 (glycyl thioester intermediate) is an active-site residue. Over residues 204–214 the composition is skewed to acidic residues; sequence SPDMDAVDPDN. The segment at 204 to 235 is disordered; that stretch reads SPDMDAVDPDNTEAVTTEKEKEAMKEEPAPVG. The segment covering 219 to 231 has biased composition (basic and acidic residues); it reads TTEKEKEAMKEEP. Residues C431 and C434 each coordinate Zn(2+). Over residues 531–570 the composition is skewed to basic and acidic residues; sequence FEVARSEKEPEPDDRKRKADGSEEPEAKRQKVEEKDDKNG. The interval 531–582 is disordered; sequence FEVARSEKEPEPDDRKRKADGSEEPEAKRQKVEEKDDKNGNEAVAEITETMA.

The protein belongs to the ubiquitin-activating E1 family. As to quaternary structure, heterodimer with aos-1.

It participates in protein modification; protein sumoylation. The dimeric enzyme acts as an E1 ligase for smo-1. It mediates ATP-dependent activation of smo-1 and formation of a thioester with a conserved cysteine residue on uba-2. The sequence is that of SUMO-activating enzyme subunit uba-2 (uba-2) from Caenorhabditis elegans.